The chain runs to 182 residues: MPLGDCNISTPDNKQNRKNQEIRVPRVRVIGSDGEMVGVLSRDEALAKAEEEGLDLVEIQPQADPPVCKIMDFGKFKFEQQKKANEAKKKTKQVEIKELKFRPVTDEGDYQIKLRNMRRFLEEGDKVKVNIRFRGREMSHQELGREMAARIEADLGDDIVIESRPRLEGRQMVMMIAPKKKV.

The interval 1-22 (MPLGDCNISTPDNKQNRKNQEI) is disordered.

This sequence belongs to the IF-3 family. Monomer.

Its subcellular location is the cytoplasm. IF-3 binds to the 30S ribosomal subunit and shifts the equilibrium between 70S ribosomes and their 50S and 30S subunits in favor of the free subunits, thus enhancing the availability of 30S subunits on which protein synthesis initiation begins. This is Translation initiation factor IF-3 from Xanthomonas axonopodis pv. citri (strain 306).